The sequence spans 344 residues: tRNA(Ile)-lysidine synthase (344 aa).

Position 43 to 48 (43 to 48) interacts with ATP; the sequence is SGGADS.

The protein belongs to the tRNA(Ile)-lysidine synthase family.

Its subcellular location is the cytoplasm. The catalysed reaction is cytidine(34) in tRNA(Ile2) + L-lysine + ATP = lysidine(34) in tRNA(Ile2) + AMP + diphosphate + H(+). Functionally, ligates lysine onto the cytidine present at position 34 of the AUA codon-specific tRNA(Ile) that contains the anticodon CAU, in an ATP-dependent manner. Cytidine is converted to lysidine, thus changing the amino acid specificity of the tRNA from methionine to isoleucine. The sequence is that of tRNA(Ile)-lysidine synthase from Bordetella parapertussis (strain 12822 / ATCC BAA-587 / NCTC 13253).